Consider the following 510-residue polypeptide: NAD(P)H-quinone oxidoreductase subunit 2 B, chloroplastic (510 aa).

The next 13 helical transmembrane spans lie at 24-44, 57-77, 99-119, 124-144, 149-169, 183-203, 227-247, 295-315, 323-343, 354-374, 395-415, 418-438, and 484-504; these read LLLF…GLIL, IPWL…SLLF, IFQF…VEYI, MAIT…MFLC, LITI…LSGY, YLLM…WLYG, PGIS…LSPA, WHLL…LIAI, MLAY…IVGD, YMLF…LFGL, ALSL…AGFF, LYLF…IGLL, and MIVC…IIAI.

It belongs to the complex I subunit 2 family. In terms of assembly, NDH is composed of at least 16 different subunits, 5 of which are encoded in the nucleus.

It is found in the plastid. It localises to the chloroplast thylakoid membrane. It carries out the reaction a plastoquinone + NADH + (n+1) H(+)(in) = a plastoquinol + NAD(+) + n H(+)(out). The catalysed reaction is a plastoquinone + NADPH + (n+1) H(+)(in) = a plastoquinol + NADP(+) + n H(+)(out). Its function is as follows. NDH shuttles electrons from NAD(P)H:plastoquinone, via FMN and iron-sulfur (Fe-S) centers, to quinones in the photosynthetic chain and possibly in a chloroplast respiratory chain. The immediate electron acceptor for the enzyme in this species is believed to be plastoquinone. Couples the redox reaction to proton translocation, and thus conserves the redox energy in a proton gradient. The protein is NAD(P)H-quinone oxidoreductase subunit 2 B, chloroplastic of Lactuca sativa (Garden lettuce).